We begin with the raw amino-acid sequence, 89 residues long: Small ribosomal subunit protein uS15 (89 aa).

This sequence belongs to the universal ribosomal protein uS15 family. In terms of assembly, part of the 30S ribosomal subunit. Forms a bridge to the 50S subunit in the 70S ribosome, contacting the 23S rRNA.

Functionally, one of the primary rRNA binding proteins, it binds directly to 16S rRNA where it helps nucleate assembly of the platform of the 30S subunit by binding and bridging several RNA helices of the 16S rRNA. In terms of biological role, forms an intersubunit bridge (bridge B4) with the 23S rRNA of the 50S subunit in the ribosome. This Pseudomonas putida (strain GB-1) protein is Small ribosomal subunit protein uS15.